Here is a 321-residue protein sequence, read N- to C-terminus: Ferredoxin--NADP reductase (321 aa).

FAD-binding residues include Glu33, Gln41, Tyr46, Val86, Leu119, Asp277, and Ser318.

The protein belongs to the ferredoxin--NADP reductase type 2 family. As to quaternary structure, homodimer. Requires FAD as cofactor.

It catalyses the reaction 2 reduced [2Fe-2S]-[ferredoxin] + NADP(+) + H(+) = 2 oxidized [2Fe-2S]-[ferredoxin] + NADPH. This Lactococcus lactis subsp. lactis (strain IL1403) (Streptococcus lactis) protein is Ferredoxin--NADP reductase.